Reading from the N-terminus, the 559-residue chain is Chaperonin GroEL 3 (559 aa).

ATP contacts are provided by residues 88 to 92 (DGTTT), Gly426, and Asp507.

The protein belongs to the chaperonin (HSP60) family. In terms of assembly, forms a cylinder of 14 subunits composed of two heptameric rings stacked back-to-back. Interacts with the co-chaperonin GroES.

It localises to the cytoplasm. The catalysed reaction is ATP + H2O + a folded polypeptide = ADP + phosphate + an unfolded polypeptide.. Together with its co-chaperonin GroES, plays an essential role in assisting protein folding. The GroEL-GroES system forms a nano-cage that allows encapsulation of the non-native substrate proteins and provides a physical environment optimized to promote and accelerate protein folding. In Methylococcus capsulatus (strain ATCC 33009 / NCIMB 11132 / Bath), this protein is Chaperonin GroEL 3.